Reading from the N-terminus, the 540-residue chain is Growth factor receptor-bound protein 14 (540 aa).

Threonine 2 bears the N-acetylthreonine mark. Position 9 is a phosphothreonine (glutamine 9). The 87-residue stretch at 106-192 (KKQVIKVYSE…NKLYFRKNYA (87 aa)) folds into the Ras-associating domain. One can recognise a PH domain in the interval 234–342 (YPEIHGFLHA…WVTAIRLLKY (109 aa)). 2 positions are modified to phosphoserine: serine 372 and serine 375. The region spanning 439–535 (WFHHKISRDE…VLPCKLKHYC (97 aa)) is the SH2 domain.

This sequence belongs to the GRB7/10/14 family. In terms of assembly, interacts with the cytoplasmic domain of the autophosphorylated insulin receptor (INSR), through the SH2 domain. Interacts with GRB14 (via BPS domain); this interaction protects the tyrosines in the activation loop on INSR from dephosphorylation. Binds to the ankyrin repeat region of TNKS2 via its N-terminus. Interacts with activated NRAS. Interacts (via SH2 domain) with TEK/TIE2 (tyrosine phosphorylated). Phosphorylated on serine residues. Phosphorylated on tyrosine residues by TEK/TIE2. As to expression, expressed at high levels in the liver, kidney, pancreas, testis, ovary, heart and skeletal muscle.

Its subcellular location is the cytoplasm. The protein localises to the endosome membrane. Functionally, adapter protein which modulates coupling of cell surface receptor kinases with specific signaling pathways. Binds to, and suppresses signals from, the activated insulin receptor (INSR). Potent inhibitor of insulin-stimulated MAPK3 phosphorylation. Plays a critical role regulating PDPK1 membrane translocation in response to insulin stimulation and serves as an adapter protein to recruit PDPK1 to activated insulin receptor, thus promoting PKB/AKT1 phosphorylation and transduction of the insulin signal. In Homo sapiens (Human), this protein is Growth factor receptor-bound protein 14 (GRB14).